The primary structure comprises 292 residues: Homoserine kinase (292 aa).

Proline 84–alanine 94 contributes to the ATP binding site.

This sequence belongs to the GHMP kinase family. Homoserine kinase subfamily.

It localises to the cytoplasm. It catalyses the reaction L-homoserine + ATP = O-phospho-L-homoserine + ADP + H(+). Its pathway is amino-acid biosynthesis; L-threonine biosynthesis; L-threonine from L-aspartate: step 4/5. Its function is as follows. Catalyzes the ATP-dependent phosphorylation of L-homoserine to L-homoserine phosphate. This chain is Homoserine kinase, found in Campylobacter jejuni subsp. jejuni serotype O:23/36 (strain 81-176).